The following is an 85-amino-acid chain: U4-theraphotoxin-Hhn1a (85 aa).

A signal peptide spans 1-22 (MKVTLIAILTCAAVLVLHTTAA). The propeptide occupies 23–48 (EELEAESQPMEVGMPDTELAAVDEER). 3 disulfide bridges follow: Cys52–Cys66, Cys56–Cys77, and Cys71–Cys82.

The protein belongs to the neurotoxin 12 (Hwtx-2) family. 02 (Hwtx-2) subfamily. As to quaternary structure, monomer. Expressed by the venom gland.

It localises to the secreted. Neurotoxin active on both insects and mammals. The sequence is that of U4-theraphotoxin-Hhn1a from Cyriopagopus hainanus (Chinese bird spider).